The chain runs to 572 residues: Proline--tRNA ligase (572 aa).

The protein belongs to the class-II aminoacyl-tRNA synthetase family. ProS type 1 subfamily. Homodimer.

The protein resides in the cytoplasm. It carries out the reaction tRNA(Pro) + L-proline + ATP = L-prolyl-tRNA(Pro) + AMP + diphosphate. In terms of biological role, catalyzes the attachment of proline to tRNA(Pro) in a two-step reaction: proline is first activated by ATP to form Pro-AMP and then transferred to the acceptor end of tRNA(Pro). As ProRS can inadvertently accommodate and process non-cognate amino acids such as alanine and cysteine, to avoid such errors it has two additional distinct editing activities against alanine. One activity is designated as 'pretransfer' editing and involves the tRNA(Pro)-independent hydrolysis of activated Ala-AMP. The other activity is designated 'posttransfer' editing and involves deacylation of mischarged Ala-tRNA(Pro). The misacylated Cys-tRNA(Pro) is not edited by ProRS. In Caldicellulosiruptor saccharolyticus (strain ATCC 43494 / DSM 8903 / Tp8T 6331), this protein is Proline--tRNA ligase.